We begin with the raw amino-acid sequence, 137 residues long: Large ribosomal subunit protein uL16 (137 aa).

It belongs to the universal ribosomal protein uL16 family. Part of the 50S ribosomal subunit.

Its function is as follows. Binds 23S rRNA and is also seen to make contacts with the A and possibly P site tRNAs. This chain is Large ribosomal subunit protein uL16, found in Spiroplasma citri.